The sequence spans 185 residues: Probable nicotinate-nucleotide adenylyltransferase (185 aa).

The protein belongs to the NadD family.

It carries out the reaction nicotinate beta-D-ribonucleotide + ATP + H(+) = deamido-NAD(+) + diphosphate. It functions in the pathway cofactor biosynthesis; NAD(+) biosynthesis; deamido-NAD(+) from nicotinate D-ribonucleotide: step 1/1. In terms of biological role, catalyzes the reversible adenylation of nicotinate mononucleotide (NaMN) to nicotinic acid adenine dinucleotide (NaAD). The sequence is that of Probable nicotinate-nucleotide adenylyltransferase from Cereibacter sphaeroides (strain ATCC 17025 / ATH 2.4.3) (Rhodobacter sphaeroides).